We begin with the raw amino-acid sequence, 183 residues long: Neuronal synaptobrevin (183 aa).

Positions 1 to 17 (MADAAPAGDAPPNAGAP) are enriched in low complexity. Residues 1 to 32 (MADAAPAGDAPPNAGAPAGEGGDGEIVGGPHN) are disordered. The Cytoplasmic portion of the chain corresponds to 1–106 (MADAAPAGDA…KFWLQNLKMM (106 aa)). The span at 18-27 (AGEGGDGEIV) shows a compositional bias: gly residues. The v-SNARE coiled-coil homology domain occupies 41-101 (RLQQTQAQVD…GKLKRKFWLQ (61 aa)). The helical transmembrane segment at 107–127 (IIMGVIGLVVVGIIANKLGLI) threads the bilayer. The Vesicular segment spans residues 128–183 (GGEQPPQYQYPPQYMQPPPPPPQQPAGGQSSLVDAAGAGDGAGAGGSAGAGDHGGV). The tract at residues 135–183 (YQYPPQYMQPPPPPPQQPAGGQSSLVDAAGAGDGAGAGGSAGAGDHGGV) is disordered. The span at 141-151 (YMQPPPPPPQQ) shows a compositional bias: pro residues. A compositionally biased stretch (gly residues) spans 165–183 (AGDGAGAGGSAGAGDHGGV).

The protein belongs to the synaptobrevin family. As to quaternary structure, part of the SNARE core complex containing Snap25 and syntaxin. As to expression, specifically expressed in neurons and synapses.

Its subcellular location is the cytoplasmic vesicle. It is found in the secretory vesicle. The protein resides in the synaptic vesicle membrane. It localises to the early endosome membrane. Functionally, involved in the targeting and/or fusion of transport vesicles to their target membrane. Major SNARE protein of synaptic vesicles which mediates fusion of synaptic vesicles to release neurotransmitters. Essential for fast vesicular exocytosis and activity-dependent neurotransmitter release as well as fast endocytosis that mediates rapid reuse of synaptic vesicles. Also involved in a neuron-specific sort-and-degrade mechanism that promotes endolysosomal degradation and is required for neuronal maintenance. This Drosophila melanogaster (Fruit fly) protein is Neuronal synaptobrevin.